Reading from the N-terminus, the 267-residue chain is Phosphatidylcholine synthase (267 aa).

Topologically, residues 1–42 (MILWRIVRPGAAMAYVQTGLVLIAEAMDTQQDSLKPRPAMRA) are cytoplasmic. Residues 43-63 (AAFSVHVFTAFGAAIALLAML) form a helical membrane-spanning segment. At 64 to 69 (EAVREH) the chain is on the periplasmic side. Residues 70–90 (WAAMFQWLGVALIIDAIDGPI) traverse the membrane as a helical segment. The Cytoplasmic segment spans residues 91–102 (ARRLDVKNVQPN). The helical transmembrane segment at 103 to 123 (WSGDVLDLVVDFVTYVFVPAY) threads the bilayer. A topological domain (periplasmic) is located at residue alanine 124. A helical transmembrane segment spans residues 125–145 (IVASGLLLPVAAPLLGVAIIV). At 146 to 162 (TSALYFADLRMKADDNH) the chain is on the cytoplasmic side. Residues 163 to 183 (FRGFPALWNAAAFYLFLLHWP) form a helical membrane-spanning segment. Proline 184 is a topological domain (periplasmic). A helical transmembrane segment spans residues 185 to 205 (LWSTLLVAALVVLTFVPFHVL). Over 206-215 (HPVRVVRLRW) the chain is Cytoplasmic. A helical membrane pass occupies residues 216–236 (LTMSLIGIWAVLSLYTLDMDF). At 237-239 (RVG) the chain is on the periplasmic side. Residues 240-260 (PGVTLALCAIALWISFSDALI) form a helical membrane-spanning segment. At 261 to 267 (RFARSFA) the chain is on the cytoplasmic side.

The protein belongs to the CDP-alcohol phosphatidyltransferase class-I family. Mn(2+) serves as cofactor.

It is found in the cell inner membrane. It carries out the reaction a CDP-1,2-diacyl-sn-glycerol + choline = a 1,2-diacyl-sn-glycero-3-phosphocholine + CMP + H(+). Its function is as follows. Condenses choline with CDP-diglyceride to produce phosphatidylcholine and CMP. This Bradyrhizobium diazoefficiens (strain JCM 10833 / BCRC 13528 / IAM 13628 / NBRC 14792 / USDA 110) protein is Phosphatidylcholine synthase.